The following is a 662-amino-acid chain: UvrABC system protein B (662 aa).

The region spanning K25–R182 is the Helicase ATP-binding domain. G38 to T45 is a binding site for ATP. The Beta-hairpin motif lies at Y91–I114. The region spanning Q429–I595 is the Helicase C-terminal domain. One can recognise a UVR domain in the interval D622–D657.

This sequence belongs to the UvrB family. In terms of assembly, forms a heterotetramer with UvrA during the search for lesions. Interacts with UvrC in an incision complex.

It localises to the cytoplasm. Functionally, the UvrABC repair system catalyzes the recognition and processing of DNA lesions. A damage recognition complex composed of 2 UvrA and 2 UvrB subunits scans DNA for abnormalities. Upon binding of the UvrA(2)B(2) complex to a putative damaged site, the DNA wraps around one UvrB monomer. DNA wrap is dependent on ATP binding by UvrB and probably causes local melting of the DNA helix, facilitating insertion of UvrB beta-hairpin between the DNA strands. Then UvrB probes one DNA strand for the presence of a lesion. If a lesion is found the UvrA subunits dissociate and the UvrB-DNA preincision complex is formed. This complex is subsequently bound by UvrC and the second UvrB is released. If no lesion is found, the DNA wraps around the other UvrB subunit that will check the other stand for damage. This is UvrABC system protein B from Clostridium botulinum (strain Langeland / NCTC 10281 / Type F).